Here is a 251-residue protein sequence, read N- to C-terminus: 3-deoxy-manno-octulosonate cytidylyltransferase (251 aa).

It belongs to the KdsB family.

It localises to the cytoplasm. The catalysed reaction is 3-deoxy-alpha-D-manno-oct-2-ulosonate + CTP = CMP-3-deoxy-beta-D-manno-octulosonate + diphosphate. It functions in the pathway nucleotide-sugar biosynthesis; CMP-3-deoxy-D-manno-octulosonate biosynthesis; CMP-3-deoxy-D-manno-octulosonate from 3-deoxy-D-manno-octulosonate and CTP: step 1/1. The protein operates within bacterial outer membrane biogenesis; lipopolysaccharide biosynthesis. Functionally, activates KDO (a required 8-carbon sugar) for incorporation into bacterial lipopolysaccharide in Gram-negative bacteria. In Rhizobium etli (strain ATCC 51251 / DSM 11541 / JCM 21823 / NBRC 15573 / CFN 42), this protein is 3-deoxy-manno-octulosonate cytidylyltransferase.